Here is a 303-residue protein sequence, read N- to C-terminus: MIQQRTLKNTIRATGVGLHSGDKVYMTLRPAPVNHGIVFRRVDLDPVVEVPAKAELVTEVTLCTGLTCNDAKIQTVEHLMSALAGLGVDNIIVELSSAELPIMDGSAGPFVFLLQSAGIVEQDAPKRFIRVLKTVEVTEGDKVARFTPYEGYKLGFTIQFDHPMIPAKQSRQEIEFSTLAYTKEISRARTFGFMRDLEYMRERNLGLGGSMDNAIVLDEFRVLNEDGLRYADEFVRHKILDAIGDLYLAGGQVLGAYEGFKSGHALNNKLVRALMADATAWEWVSFDSPATPDPVEYATPAYA.

Zn(2+) contacts are provided by His-78, His-237, and Asp-241. Catalysis depends on His-264, which acts as the Proton donor.

Belongs to the LpxC family. Zn(2+) serves as cofactor.

It carries out the reaction a UDP-3-O-[(3R)-3-hydroxyacyl]-N-acetyl-alpha-D-glucosamine + H2O = a UDP-3-O-[(3R)-3-hydroxyacyl]-alpha-D-glucosamine + acetate. It functions in the pathway glycolipid biosynthesis; lipid IV(A) biosynthesis; lipid IV(A) from (3R)-3-hydroxytetradecanoyl-[acyl-carrier-protein] and UDP-N-acetyl-alpha-D-glucosamine: step 2/6. Catalyzes the hydrolysis of UDP-3-O-myristoyl-N-acetylglucosamine to form UDP-3-O-myristoylglucosamine and acetate, the committed step in lipid A biosynthesis. This is UDP-3-O-acyl-N-acetylglucosamine deacetylase from Stenotrophomonas maltophilia (strain R551-3).